A 968-amino-acid polypeptide reads, in one-letter code: RNA polymerase-associated protein RapA (968 aa).

A Helicase ATP-binding domain is found at 164 to 334 (EVGQRHAPRV…FARLRLLDPN (171 aa)). 177–184 (DEVGLGKT) contacts ATP. The DEAH box signature appears at 280–283 (DEAH). The Helicase C-terminal domain occupies 490–664 (RVEWLLNYLV…AAPTEQEGLD (175 aa)).

It belongs to the SNF2/RAD54 helicase family. RapA subfamily. As to quaternary structure, interacts with the RNAP. Has a higher affinity for the core RNAP than for the holoenzyme. Its ATPase activity is stimulated by binding to RNAP.

Transcription regulator that activates transcription by stimulating RNA polymerase (RNAP) recycling in case of stress conditions such as supercoiled DNA or high salt concentrations. Probably acts by releasing the RNAP, when it is trapped or immobilized on tightly supercoiled DNA. Does not activate transcription on linear DNA. Probably not involved in DNA repair. In Serratia proteamaculans (strain 568), this protein is RNA polymerase-associated protein RapA.